Consider the following 125-residue polypeptide: Small ribosomal subunit protein uS13 (125 aa).

The disordered stretch occupies residues Thr90–Lys125.

Belongs to the universal ribosomal protein uS13 family. In terms of assembly, part of the 30S ribosomal subunit. Forms a loose heterodimer with protein S19. Forms two bridges to the 50S subunit in the 70S ribosome.

Functionally, located at the top of the head of the 30S subunit, it contacts several helices of the 16S rRNA. In the 70S ribosome it contacts the 23S rRNA (bridge B1a) and protein L5 of the 50S subunit (bridge B1b), connecting the 2 subunits; these bridges are implicated in subunit movement. Contacts the tRNAs in the A and P-sites. The chain is Small ribosomal subunit protein uS13 from Gemmatimonas aurantiaca (strain DSM 14586 / JCM 11422 / NBRC 100505 / T-27).